The chain runs to 591 residues: MKKISLPKIGIRPVIDGRRMGVRESLEEQTMNMAKATAALITEKMRHACGAQVECVIADTCIAGMAESAACEEKFSSQNVGVTITVTPCWCYGSETIDMDPMRPKAIWGFNGTERPGAVYLAAALAAHSQKGIPAFSIYGHDVQDADDTSIPADVEEKLLRFARAGLAVASMKGKSYLSVGGVSMGIAGSIVDHNFFESWLGMKVQAVDMTELRRRIDQKIYDEAELEMALAWADKNFRYGEDQNASQYKRNEAQNRAVLKESLLMAMCIRDMMQGNKTLADKGLVEESLGYNAIAAGFQGQRHWTDQYPNGDTAEALLNSSFDWNGVREPFVVATENDSLNGVAMLFGHQLTGTAQIFADVRTYWSPEAVERVTGQALSGLAEHGIIHLINSGSAALDGACKQRDSEGKPTMKPHWEISQQEADACLAATEWCPAIHEYFRGGGYSSRFLTEGGVPFTMTRVNIIKGLGPVLQIAEGWSVELPKAMHDQLDARTNSTWPTTWFAPRLTGKGPFTDVYSVMANWGANHGVLTIGHVGADFITLAAMLRIPVCMHNVEEAKIYRPSAWAAHGMDIEGQDYRACQNYGPLYKR.

Active-site proton acceptor residues include glutamate 337 and aspartate 361. Glutamate 337, aspartate 361, and histidine 528 together coordinate Mn(2+).

This sequence belongs to the L-fucose isomerase family. Homohexamer. Mn(2+) is required as a cofactor.

It is found in the cytoplasm. It carries out the reaction L-fucose = L-fuculose. Its pathway is carbohydrate degradation; L-fucose degradation; L-lactaldehyde and glycerone phosphate from L-fucose: step 1/3. Converts the aldose L-fucose into the corresponding ketose L-fuculose. The chain is L-fucose isomerase from Salmonella paratyphi B (strain ATCC BAA-1250 / SPB7).